A 225-amino-acid chain; its full sequence is Ribosomal RNA large subunit methyltransferase E (225 aa).

Glycine 79, tryptophan 81, aspartate 97, aspartate 113, and aspartate 137 together coordinate S-adenosyl-L-methionine. Lysine 177 serves as the catalytic Proton acceptor.

This sequence belongs to the class I-like SAM-binding methyltransferase superfamily. RNA methyltransferase RlmE family.

It is found in the cytoplasm. The catalysed reaction is uridine(2552) in 23S rRNA + S-adenosyl-L-methionine = 2'-O-methyluridine(2552) in 23S rRNA + S-adenosyl-L-homocysteine + H(+). In terms of biological role, specifically methylates the uridine in position 2552 of 23S rRNA at the 2'-O position of the ribose in the fully assembled 50S ribosomal subunit. The sequence is that of Ribosomal RNA large subunit methyltransferase E from Acidiphilium cryptum (strain JF-5).